Consider the following 322-residue polypeptide: uncharacterized protein (322 aa).

A run of 4 helical transmembrane segments spans residues 24–44 (LLHLQNFASAGIITILCIQIT), 68–88 (LFFELIGYHPFVIGALLLIFI), 100–120 (IVTSSVIILHLYMSGGITPTF), and 125–145 (VQLITVGIGVALLMNLYMPSL).

Its subcellular location is the cell membrane. This is an uncharacterized protein from Bacillus subtilis (strain 168).